The primary structure comprises 381 residues: Phenylalanine dehydrogenase (381 aa).

Arg-55 contributes to the NAD(+) binding site. Residue Lys-79 participates in L-phenylalanine binding. Lys-91 is an active-site residue. NAD(+) contacts are provided by residues Asp-126, Ser-157, Thr-161, 191-197 (GLGKVGY), 214-215 (DI), 254-255 (AM), and 275-277 (SAN). Asn-277 serves as a coordination point for L-phenylalanine.

The protein belongs to the Glu/Leu/Phe/Val dehydrogenases family.

It carries out the reaction L-phenylalanine + NAD(+) + H2O = 3-phenylpyruvate + NH4(+) + NADH + H(+). Its pathway is amino-acid biosynthesis; L-phenylalanine biosynthesis; L-phenylalanine from phenylpyruvate (PDH route): step 1/1. In terms of biological role, catalyzes the reversible NAD(+)-dependent oxidative deamination of L-phenylalanine to phenylpyruvate. This chain is Phenylalanine dehydrogenase, found in Lysinibacillus sphaericus (Bacillus sphaericus).